A 302-amino-acid chain; its full sequence is Succinate--CoA ligase [ADP-forming] subunit alpha (302 aa).

CoA-binding positions include 17 to 20, K43, and 96 to 98; these read TGST and ITE. Y159 serves as a coordination point for substrate. The Tele-phosphohistidine intermediate role is filled by H247.

This sequence belongs to the succinate/malate CoA ligase alpha subunit family. As to quaternary structure, heterotetramer of two alpha and two beta subunits.

It carries out the reaction succinate + ATP + CoA = succinyl-CoA + ADP + phosphate. It catalyses the reaction GTP + succinate + CoA = succinyl-CoA + GDP + phosphate. The protein operates within carbohydrate metabolism; tricarboxylic acid cycle; succinate from succinyl-CoA (ligase route): step 1/1. Its function is as follows. Succinyl-CoA synthetase functions in the citric acid cycle (TCA), coupling the hydrolysis of succinyl-CoA to the synthesis of either ATP or GTP and thus represents the only step of substrate-level phosphorylation in the TCA. The alpha subunit of the enzyme binds the substrates coenzyme A and phosphate, while succinate binding and nucleotide specificity is provided by the beta subunit. This chain is Succinate--CoA ligase [ADP-forming] subunit alpha, found in Staphylococcus epidermidis (strain ATCC 35984 / DSM 28319 / BCRC 17069 / CCUG 31568 / BM 3577 / RP62A).